Reading from the N-terminus, the 185-residue chain is Ribosome-recycling factor (185 aa).

The protein belongs to the RRF family.

Its subcellular location is the cytoplasm. Responsible for the release of ribosomes from messenger RNA at the termination of protein biosynthesis. May increase the efficiency of translation by recycling ribosomes from one round of translation to another. This Wolbachia sp. subsp. Brugia malayi (strain TRS) protein is Ribosome-recycling factor.